The sequence spans 199 residues: Probable nicotinate-nucleotide adenylyltransferase (199 aa).

The protein belongs to the NadD family.

It catalyses the reaction nicotinate beta-D-ribonucleotide + ATP + H(+) = deamido-NAD(+) + diphosphate. The protein operates within cofactor biosynthesis; NAD(+) biosynthesis; deamido-NAD(+) from nicotinate D-ribonucleotide: step 1/1. Its function is as follows. Catalyzes the reversible adenylation of nicotinate mononucleotide (NaMN) to nicotinic acid adenine dinucleotide (NaAD). This Chloroherpeton thalassium (strain ATCC 35110 / GB-78) protein is Probable nicotinate-nucleotide adenylyltransferase.